We begin with the raw amino-acid sequence, 191 residues long: uncharacterized protein (191 aa).

The next 4 membrane-spanning stretches (helical) occupy residues 12–32 (FAFL…FFTL), 48–68 (LVAL…LTLF), 92–112 (YISV…LLSL), and 168–188 (IFCL…SCAF).

It is found in the membrane. This is an uncharacterized protein from Saccharomyces cerevisiae (strain ATCC 204508 / S288c) (Baker's yeast).